The sequence spans 356 residues: S-adenosylmethionine:tRNA ribosyltransferase-isomerase (356 aa).

Belongs to the QueA family. Monomer.

It is found in the cytoplasm. The catalysed reaction is 7-aminomethyl-7-carbaguanosine(34) in tRNA + S-adenosyl-L-methionine = epoxyqueuosine(34) in tRNA + adenine + L-methionine + 2 H(+). Its pathway is tRNA modification; tRNA-queuosine biosynthesis. Functionally, transfers and isomerizes the ribose moiety from AdoMet to the 7-aminomethyl group of 7-deazaguanine (preQ1-tRNA) to give epoxyqueuosine (oQ-tRNA). This Ralstonia nicotianae (strain ATCC BAA-1114 / GMI1000) (Ralstonia solanacearum) protein is S-adenosylmethionine:tRNA ribosyltransferase-isomerase.